The primary structure comprises 344 residues: Secreted LysM effector LysM2 (344 aa).

An N-terminal signal peptide occupies residues 1 to 24 (MMAPKSLQTGLLILLLAKLKLAWG). The LysM 1 domain occupies 36–80 (YEAAASSGDTCTSFAAEWGLTEETFASLNPSAACPSLVAGQNYCM). Low complexity predominate over residues 88–134 (STTSSSSSTTSSSTTSSSTTSSSTTSSSTTTSSFTTTTASETTSTAA). The interval 88 to 141 (STTSSSSSTTSSSTTSSSTTSSSTTSSSTTTSSFTTTTASETTSTAANGVTTPM) is disordered. LysM domains follow at residues 153–199 (KFDL…YVCV), 216–262 (KFDL…YVCV), and 296–342 (KFWL…YICV).

Belongs to the secreted LysM effector family.

Might have a role in sequestration of chitin oligosaccharides (breakdown products of fungal cell walls that are released during invasion and act as triggers of host immunity) to dampen host defense. This Penicillium expansum (Blue mold rot fungus) protein is Secreted LysM effector LysM2.